The following is a 273-amino-acid chain: SAGA-associated factor 29 homolog B (273 aa).

The region spanning 128 to 273 (EAYASLKGEQ…VVALPEGHRQ (146 aa)) is the SGF29 C-terminal domain. Histone H3K4me3 N-terminus binding stretches follow at residues 171–173 (DEE) and 220–223 (GTTA). Residues 245–248 (FDDD) form a histone H3K4me3 binding region.

It belongs to the SGF29 family. Expressed in roots, rosette leaves, cauline leaves, stems and flowers.

Its subcellular location is the nucleus. Chromatin reader component of the transcription regulatory histone acetylation (HAT) complex SAGA. The protein is SAGA-associated factor 29 homolog B of Arabidopsis thaliana (Mouse-ear cress).